We begin with the raw amino-acid sequence, 93 residues long: Alpha-defensin 26 (93 aa).

A signal peptide spans 1-19 (MKTLVLLSALFLLAFQVQA). Positions 20–58 (DPIQNTDEETNTEVQPQEEDQAVSVSFGNPEGSDLQEES) are excised as a propeptide. The segment at 24-55 (NTDEETNTEVQPQEEDQAVSVSFGNPEGSDLQ) is disordered. The segment covering 25 to 40 (TDEETNTEVQPQEEDQ) has biased composition (acidic residues). Cystine bridges form between cysteine 64-cysteine 92, cysteine 66-cysteine 81, and cysteine 71-cysteine 91.

This sequence belongs to the alpha-defensin family.

It is found in the secreted. Functionally, may have microbicidal activities. In Mus musculus (Mouse), this protein is Alpha-defensin 26 (Defa26).